The chain runs to 366 residues: DNA repair protein RAD51 homolog 3 (366 aa).

Residues 1–117 form a required for Holliday junction resolution activity region; it reads MQRELVSFPL…LMKTTEVCGV (117 aa). At serine 11 the chain carries Phosphoserine. The tract at residues 70–127 is interaction with RAD51B, RAD51D and XRCC3; the sequence is SVAGKKYTALELLEQEHTQGFIITFCSALDNILGGGIPLMKTTEVCGVPGVGKTQLCM. 116–123 is an ATP binding site; sequence GVPGVGKT. The disordered stretch occupies residues 338–366; the sequence is RDAAVTASSSQTEGSSNLRKRSREPEEGC. The span at 343-354 shows a compositional bias: polar residues; sequence TASSSQTEGSSN. The Nuclear localization signal signature appears at 356–360; the sequence is RKRSR.

This sequence belongs to the RecA family. RAD51 subfamily. Part of the RAD51 paralog protein complexes BCDX2 and CX3; the complexes have a ring-like structure arranged into a flat disc around a central channel. The BCDX2 complex consits of RAD51B, RAD51C, RAD51D and XRCC2; the CX3 complex consists of RAD51C and XRCC3. The BCDX2 subcomplex RAD51B:RAD51C interacts with RAD51. Interacts with SWSAP1; involved in homologous recombination repair. Interacts directly with PALB2 which may serve as a scaffold for a HR complex containing PALB2, BRCA2, RAD51C, RAD51 and XRCC3. Interacts with HELQ.

It localises to the nucleus. It is found in the cytoplasm. The protein resides in the perinuclear region. The protein localises to the mitochondrion. Essential for the homologous recombination (HR) pathway of DNA repair. Involved in the homologous recombination repair (HRR) pathway of double-stranded DNA breaks arising during DNA replication or induced by DNA-damaging agents. Part of the RAD51 paralog protein complexes BCDX2 and CX3 which act at different stages of the BRCA1-BRCA2-dependent HR pathway. Upon DNA damage, BCDX2 seems to act downstream of BRCA2 recruitment and upstream of RAD51 recruitment; CX3 seems to act downstream of RAD51 recruitment; both complexes bind predominantly to the intersection of the four duplex arms of the Holliday junction (HJ) and to junction of replication forks. The BCDX2 complex was originally reported to bind single-stranded DNA, single-stranded gaps in duplex DNA and specifically to nicks in duplex DNA. The BCDX2 subcomplex RAD51B:RAD51C exhibits single-stranded DNA-dependent ATPase activity suggesting an involvement in early stages of the HR pathway. Involved in RAD51 foci formation in response to DNA damage suggesting an involvement in early stages of HR probably in the invasion step. Has an early function in DNA repair in facilitating phosphorylation of the checkpoint kinase CHEK2 and thereby transduction of the damage signal, leading to cell cycle arrest and HR activation. Participates in branch migration and HJ resolution and thus is important for processing HR intermediates late in the DNA repair process; the function may be linked to the CX3 complex. Part of a PALB2-scaffolded HR complex containing BRCA2 and which is thought to play a role in DNA repair by HR. Protects RAD51 from ubiquitin-mediated degradation that is enhanced following DNA damage. Plays a role in regulating mitochondrial DNA copy number under conditions of oxidative stress in the presence of RAD51 and XRCC3. Contributes to DNA cross-link resistance, sister chromatid cohesion and genomic stability. Involved in maintaining centrosome number in mitosis. This chain is DNA repair protein RAD51 homolog 3 (RAD51C), found in Cricetulus griseus (Chinese hamster).